The primary structure comprises 126 residues: Scygonadin (126 aa).

Positions 1–24 (MRSSLLLGLTVVVLLGVIVPPCMA) are cleaved as a signal peptide.

As to expression, expressed in the ejaculatory ducts of mature males. Not detected in the ejaculatory ducts of immature males. Not detected in hepatopancreas, female reproductive tract, eyes, exoskeleton, subcuticular epithelia, heart, gills, stomach, muscle and hemocytes.

The protein localises to the secreted. Its function is as follows. Has antibacterial activity against the Gram-positive bacterium M.luteus with an IC(90) of 125ug/ml. Has weak antibacterial activity against the Gram-negative bacterium A.hydrophila. This Scylla serrata (Mud crab) protein is Scygonadin.